Here is a 300-residue protein sequence, read N- to C-terminus: Tyrosine recombinase XerC (300 aa).

The 86-residue stretch at Thr2–Val87 folds into the Core-binding (CB) domain. The Tyr recombinase domain maps to Thr108–Asp294. Active-site residues include Arg148, Lys172, His246, Arg249, and His272. Tyr281 (O-(3'-phospho-DNA)-tyrosine intermediate) is an active-site residue.

It belongs to the 'phage' integrase family. XerC subfamily. Forms a cyclic heterotetrameric complex composed of two molecules of XerC and two molecules of XerD.

The protein localises to the cytoplasm. In terms of biological role, site-specific tyrosine recombinase, which acts by catalyzing the cutting and rejoining of the recombining DNA molecules. The XerC-XerD complex is essential to convert dimers of the bacterial chromosome into monomers to permit their segregation at cell division. It also contributes to the segregational stability of plasmids. This Myxococcus xanthus protein is Tyrosine recombinase XerC.